Here is a 599-residue protein sequence, read N- to C-terminus: MFS-type transporter ucsM (599 aa).

Over residues 23–34 the composition is skewed to basic and acidic residues; sequence AHHHGKEREAHR. The tract at residues 23-42 is disordered; sequence AHHHGKEREAHRQSLSSVPG. 8 helical membrane passes run 147–167, 178–198, 204–224, 263–283, 291–311, 386–406, 424–444, and 454–474; these read VALGLVFSFLSYVIPIFGAWL, ILIGVLIGGVAHIIMIAGAVP, GKGTAPFLVSLFLLALGAGLF, IMLIFYALINVGAFYSLATVY, WLAFLLPGIIYLLLPLMLWYL, IFLYFPIYHLNDGGVGTILPS, FNPITIMITVPVLTYIVYPAL, and ISRITLGFWLAVISGLVSSLV. Asparagine 517 carries N-linked (GlcNAc...) asparagine glycosylation. The next 2 membrane-spanning stretches (helical) occupy residues 539-559 and 563-583; these read LFLFSTALSSALGLILTPAIV and LVWVWAGPTIALAVQTVIFWV.

Belongs to the major facilitator superfamily. Proton-dependent oligopeptide transporter (POT/PTR) (TC 2.A.17) family.

It localises to the membrane. Its function is as follows. MFS-type transporter; part of the gene cluster that mediates the biosynthesis of UCS1025A, a member of the pyrrolizidinone family that acts as a strong telomerase inhibitor and displays potent antibacterial and antitumor properties. These compounds share a hemiaminal-containing pyrrolizidinone core fused with a gamma-lactone, giving a furopyrrolizidine that is connected to a decalin fragment. The polypeptide is MFS-type transporter ucsM (Acremonium sp).